The chain runs to 293 residues: MSIFIHKDSRVVVQGVTGKEGAFWAKHMKDMGTQVVFGVTPGKEGQDVDGIPVYHSVRRGIKDHPADVAMLFVPPKFTKDAVFEALDAGIKKICTIADGIPLHEAIQIRRAALSCGAMVVGGNTSGIISVGEAMLGTIPYWIDRVYKKGHVGVMTRSGSLTNEVTAEIVKGGFGVTTLIGVGGDPVPGTRFAELLPLYEADPDTHAVVIIGELGGTMEEEVAEAMEAKAFTKPLVAFMGGRTAPEGKRMGHAGAIVTGGRGTVKGKTEAIVKAGGKVAKRPSEVGALLKALLG.

Residues 17-20 (TGKE), K43, and 96-98 (IAD) contribute to the CoA site. The active-site Tele-phosphohistidine intermediate is H251.

This sequence belongs to the succinate/malate CoA ligase alpha subunit family. Forms a complex with SauC.

It carries out the reaction sulfoacetate + ATP + CoA = sulfoacetyl-CoA + ADP + phosphate. In terms of biological role, involved in the degradation of sulfoacetate. Catalyzes the CoA- and ATP-dependent conversion of sulfoacetate to sulfoacetyl-CoA and ADP. Cannot use other sulfonic and carboxylic acids, and shows only residual activity with 3-sulfopropanoate and malonic acid. The sequence is that of ADP-forming sulfoacetate-CoA ligase subunit SauD from Bilophila wadsworthia (strain 3_1_6).